Consider the following 500-residue polypeptide: NAD(P)H-quinone oxidoreductase chain 4, chloroplastic (500 aa).

14 helical membrane-spanning segments follow: residues 4-24 (FPWL…IFFL), 35-55 (YTIA…CYHF), 87-107 (LGSI…AWPV), 111-131 (SQLF…LFSS), 134-154 (LLLF…LLSM), 167-187 (FILY…GMGL), 211-231 (ILLY…IPLH), 242-262 (HYST…YGLI), 274-294 (YLFS…AALT), 313-333 (MGFI…GAIL), 334-354 (QILS…TACD), 386-406 (LALP…GLIT), 417-437 (LITF…LSML), and 462-482 (LFLL…PDFV).

Belongs to the complex I subunit 4 family.

The protein resides in the plastid. It localises to the chloroplast thylakoid membrane. It catalyses the reaction a plastoquinone + NADH + (n+1) H(+)(in) = a plastoquinol + NAD(+) + n H(+)(out). The enzyme catalyses a plastoquinone + NADPH + (n+1) H(+)(in) = a plastoquinol + NADP(+) + n H(+)(out). The chain is NAD(P)H-quinone oxidoreductase chain 4, chloroplastic from Saccharum hybrid (Sugarcane).